Here is an 875-residue protein sequence, read N- to C-terminus: Alanine--tRNA ligase (875 aa).

Zn(2+) is bound by residues His564, His568, Cys666, and His670.

The protein belongs to the class-II aminoacyl-tRNA synthetase family. Homotetramer. Requires Zn(2+) as cofactor.

The protein localises to the cytoplasm. The catalysed reaction is tRNA(Ala) + L-alanine + ATP = L-alanyl-tRNA(Ala) + AMP + diphosphate. Its function is as follows. Catalyzes the attachment of alanine to tRNA(Ala) in a two-step reaction: alanine is first activated by ATP to form Ala-AMP and then transferred to the acceptor end of tRNA(Ala). Also edits incorrectly charged Ser-tRNA(Ala) and Gly-tRNA(Ala) via its editing domain. The sequence is that of Alanine--tRNA ligase from Yersinia pseudotuberculosis serotype O:1b (strain IP 31758).